The following is a 113-amino-acid chain: Putative pterin-4-alpha-carbinolamine dehydratase (113 aa).

This sequence belongs to the pterin-4-alpha-carbinolamine dehydratase family.

It catalyses the reaction (4aS,6R)-4a-hydroxy-L-erythro-5,6,7,8-tetrahydrobiopterin = (6R)-L-erythro-6,7-dihydrobiopterin + H2O. The protein is Putative pterin-4-alpha-carbinolamine dehydratase of Legionella pneumophila (strain Paris).